Here is a 626-residue protein sequence, read N- to C-terminus: Carnitine O-acetyltransferase (626 aa).

K93 bears the N6-succinyllysine mark. K261 is subject to N6-acetyllysine; alternate. Position 261 is an N6-succinyllysine; alternate (K261). K268 carries the N6-acetyllysine modification. The active-site Proton acceptor is the H343. CoA-binding positions include K419 and K423–D430. (R)-carnitine-binding residues include Y452 and S454. Residue S456 participates in CoA binding. Position 465 (T465) interacts with (R)-carnitine. Residues R504 and Q555 each coordinate CoA. A Microbody targeting signal motif is present at residues A624–L626.

It belongs to the carnitine/choline acetyltransferase family. As to quaternary structure, monomer. In terms of tissue distribution, mostly in skeletal muscle, less in heart, liver and pancreas, only weakly detectable in brain, placenta, lung and kidney.

It is found in the endoplasmic reticulum. The protein localises to the peroxisome. Its subcellular location is the mitochondrion inner membrane. It localises to the mitochondrion. It catalyses the reaction (R)-carnitine + acetyl-CoA = O-acetyl-(R)-carnitine + CoA. The catalysed reaction is propanoyl-CoA + (R)-carnitine = O-propanoyl-(R)-carnitine + CoA. The enzyme catalyses butanoyl-CoA + (R)-carnitine = O-butanoyl-(R)-carnitine + CoA. It carries out the reaction hexanoyl-CoA + (R)-carnitine = O-hexanoyl-(R)-carnitine + CoA. It catalyses the reaction octanoyl-CoA + (R)-carnitine = O-octanoyl-(R)-carnitine + CoA. The catalysed reaction is decanoyl-CoA + (R)-carnitine = O-decanoyl-(R)-carnitine + CoA. The enzyme catalyses 3-methylbutanoyl-CoA + (R)-carnitine = O-3-methylbutanoyl-(R)-carnitine + CoA. It carries out the reaction 2-methylpropanoyl-CoA + (R)-carnitine = O-isobutanoyl-(R)-carnitine + CoA. It catalyses the reaction 2-methylbutanoyl-CoA + (R)-carnitine = O-2-methylbutanoyl-(R)-carnitine + CoA. The catalysed reaction is acetoacetyl-CoA + (R)-carnitine = O-3-oxobutanoyl-(R)-carnitine + CoA. The enzyme catalyses 3-hydroxybutanoyl-CoA + (R)-carnitine = O-3-hydroxybutanoyl-(R)-carnitine + CoA. It carries out the reaction 4,8-dimethylnonanoyl-CoA + (R)-carnitine = O-4,8-dimethylnonanoyl-(R)-carnitine + CoA. It catalyses the reaction 2,6-dimethylheptanoyl-CoA + (R)-carnitine = O-2,6-dimethylheptanoyl-(R)-carnitine + CoA. Catalyzes the reversible transfer of acyl groups from carnitine to coenzyme A (CoA) and regulates the acyl-CoA/CoA ratio. Also plays a crucial role in the transport of fatty acids for beta-oxidation. Responsible for the synthesis of short- and branched-chain acylcarnitines. Active towards some branched-chain amino acid oxidation pathway (BCAAO) intermediates. Trans-2-enoyl-CoAs and 2-methylacyl-CoAs are poor substrates. The chain is Carnitine O-acetyltransferase from Homo sapiens (Human).